Consider the following 1243-residue polypeptide: DNA polymerase II large subunit (1243 aa).

This sequence belongs to the archaeal DNA polymerase II family. Heterodimer of a large subunit and a small subunit.

The enzyme catalyses DNA(n) + a 2'-deoxyribonucleoside 5'-triphosphate = DNA(n+1) + diphosphate. It carries out the reaction Exonucleolytic cleavage in the 3'- to 5'-direction to yield nucleoside 5'-phosphates.. In terms of biological role, possesses two activities: a DNA synthesis (polymerase) and an exonucleolytic activity that degrades single-stranded DNA in the 3'- to 5'-direction. Has a template-primer preference which is characteristic of a replicative DNA polymerase. This is DNA polymerase II large subunit from Nanoarchaeum equitans (strain Kin4-M).